The sequence spans 238 residues: Small ribosomal subunit protein uS2 (238 aa).

Belongs to the universal ribosomal protein uS2 family.

The protein is Small ribosomal subunit protein uS2 of Actinobacillus pleuropneumoniae serotype 7 (strain AP76).